Here is a 260-residue protein sequence, read N- to C-terminus: Type II methyltransferase M.CviBI (260 aa).

Tryptophan 7, lysine 11, aspartate 54, and aspartate 177 together coordinate S-adenosyl-L-methionine.

The protein belongs to the N(4)/N(6)-methyltransferase family.

The catalysed reaction is a 2'-deoxyadenosine in DNA + S-adenosyl-L-methionine = an N(6)-methyl-2'-deoxyadenosine in DNA + S-adenosyl-L-homocysteine + H(+). Functionally, a alpha subtype methylase, recognizes the double-stranded sequence 5'-GANTC-3', methylates A-2 on both strands, and protects the DNA from cleavage by the CviBI endonuclease. In Paramecium bursaria Chlorella virus NC1A (PBCV-NC1A), this protein is Type II methyltransferase M.CviBI.